We begin with the raw amino-acid sequence, 311 residues long: Methionyl-tRNA formyltransferase (311 aa).

Residue 109-112 (SLLP) participates in (6S)-5,6,7,8-tetrahydrofolate binding.

This sequence belongs to the Fmt family.

It catalyses the reaction L-methionyl-tRNA(fMet) + (6R)-10-formyltetrahydrofolate = N-formyl-L-methionyl-tRNA(fMet) + (6S)-5,6,7,8-tetrahydrofolate + H(+). In terms of biological role, attaches a formyl group to the free amino group of methionyl-tRNA(fMet). The formyl group appears to play a dual role in the initiator identity of N-formylmethionyl-tRNA by promoting its recognition by IF2 and preventing the misappropriation of this tRNA by the elongation apparatus. The sequence is that of Methionyl-tRNA formyltransferase from Kosmotoga olearia (strain ATCC BAA-1733 / DSM 21960 / TBF 19.5.1).